A 197-amino-acid polypeptide reads, in one-letter code: Holliday junction branch migration complex subunit RuvA (197 aa).

Residues 1–64 (MYDYIKGIYK…DDSINLYGFF (64 aa)) are domain I. The interval 65-143 (TEEERDMFNL…NDDIISDIDD (79 aa)) is domain II. Residues 144-154 (LDSISNFQLHS) form a flexible linker region. The tract at residues 154-197 (SAEALEALMSLGYSQKESEKALKNVDKENSLEDIIKACLKYLMG) is domain III.

The protein belongs to the RuvA family. As to quaternary structure, homotetramer. Forms an RuvA(8)-RuvB(12)-Holliday junction (HJ) complex. HJ DNA is sandwiched between 2 RuvA tetramers; dsDNA enters through RuvA and exits via RuvB. An RuvB hexamer assembles on each DNA strand where it exits the tetramer. Each RuvB hexamer is contacted by two RuvA subunits (via domain III) on 2 adjacent RuvB subunits; this complex drives branch migration. In the full resolvosome a probable DNA-RuvA(4)-RuvB(12)-RuvC(2) complex forms which resolves the HJ.

The protein resides in the cytoplasm. The RuvA-RuvB-RuvC complex processes Holliday junction (HJ) DNA during genetic recombination and DNA repair, while the RuvA-RuvB complex plays an important role in the rescue of blocked DNA replication forks via replication fork reversal (RFR). RuvA specifically binds to HJ cruciform DNA, conferring on it an open structure. The RuvB hexamer acts as an ATP-dependent pump, pulling dsDNA into and through the RuvAB complex. HJ branch migration allows RuvC to scan DNA until it finds its consensus sequence, where it cleaves and resolves the cruciform DNA. In Clostridium tetani (strain Massachusetts / E88), this protein is Holliday junction branch migration complex subunit RuvA.